A 961-amino-acid polypeptide reads, in one-letter code: Copper-exporting P-type ATPase (961 aa).

HMA domains are found at residues 3 to 64 and 69 to 130; these read QTTL…YQAT and PDVE…YHAT. Cu(+)-binding residues include C14, C17, C80, and C83. 2 disordered regions span residues 131 to 153 and 178 to 201; these read QQGIDSPKTEPLTHSAQSQPESL and VLPTNTALPTNTTSTTSTADTASA. Positions 142–151 are enriched in polar residues; sequence LTHSAQSQPE. The HMA 3 domain occupies 226-289; the sequence is ESVQLLLTGM…AVKNAGYGAE (64 aa). 2 residues coordinate Cu(+): C237 and C240. Helical transmembrane passes span 316–336, 345–365, 381–401, 565–585, and 592–612; these read AALGLLLGIPLMAWGLFGGSM, PWLIIGIITLLVMIFAGGHFY, TLVALGTGAAWIYSITVNIWP, AVFVPTVVVIAIVAGLIWYFF, and VYTLVVATTVLIIACPCALGL. The active-site 4-aspartylphosphate intermediate is the D650. Mg(2+) contacts are provided by D847 and D851. Helical transmembrane passes span 860 to 880, 906 to 926, and 928 to 948; these read VGIAMGGGSDIAIETAAITLM, LGAFFYNALGIPIAAGILYPF, and GTLLSPVVAGAAMALSSITVV.

This sequence belongs to the cation transport ATPase (P-type) (TC 3.A.3) family. Type IB subfamily.

It localises to the cell membrane. It carries out the reaction Cu(+)(in) + ATP + H2O = Cu(+)(out) + ADP + phosphate + H(+). In terms of biological role, involved in copper export. The protein is Copper-exporting P-type ATPase (copA) of Yersinia pestis.